The primary structure comprises 351 residues: DNA polymerase IV (351 aa).

Positions 4-185 (IIHVDMDCFF…LPLAKIPGVG (182 aa)) constitute a UmuC domain. Mg(2+) contacts are provided by aspartate 8 and aspartate 103. Glutamate 104 is a catalytic residue.

The protein belongs to the DNA polymerase type-Y family. In terms of assembly, monomer. The cofactor is Mg(2+).

The protein resides in the cytoplasm. It catalyses the reaction DNA(n) + a 2'-deoxyribonucleoside 5'-triphosphate = DNA(n+1) + diphosphate. Its function is as follows. Poorly processive, error-prone DNA polymerase involved in untargeted mutagenesis. Copies undamaged DNA at stalled replication forks, which arise in vivo from mismatched or misaligned primer ends. These misaligned primers can be extended by PolIV. Exhibits no 3'-5' exonuclease (proofreading) activity. May be involved in translesional synthesis, in conjunction with the beta clamp from PolIII. The chain is DNA polymerase IV from Escherichia coli O9:H4 (strain HS).